Consider the following 226-residue polypeptide: Beta-phosphoglucomutase (226 aa).

The active-site Nucleophile is D7. Residues D7 and D9 each coordinate Mg(2+). D7 is subject to 4-aspartylphosphate. The active-site Proton donor/acceptor is D9. Residues D9, G44, I45, R47, S116, R117, and N118 each coordinate beta-D-glucose 6-phosphate. Residue D170 coordinates Mg(2+).

Belongs to the HAD-like hydrolase superfamily. CbbY/CbbZ/Gph/YieH family. Homodimer. Mg(2+) serves as cofactor. In terms of processing, autophosphorylated.

It localises to the cytoplasm. It catalyses the reaction beta-D-glucose 1-phosphate = beta-D-glucose 6-phosphate. Catalyzes the interconversion of D-glucose 1-phosphate (G1P) and D-glucose 6-phosphate (G6P), forming beta-D-glucose 1,6-(bis)phosphate (beta-G16P) as an intermediate. The sequence is that of Beta-phosphoglucomutase (yvdM) from Bacillus subtilis (strain 168).